The chain runs to 1114 residues: Transcriptional repressor NF-X1 (1114 aa).

An interaction with PABPC1 and PABC4 region spans residues 9-26 (GTFKFNTDAAEFIPQERK). 3 disordered regions span residues 20 to 220 (FIPQ…CRKP), 232 to 287 (QRRY…PTKS), and 299 to 325 (KSSR…FPRG). Phosphoserine is present on residues serine 50, serine 81, serine 92, serine 126, serine 130, and serine 147. 2 stretches are compositionally biased toward polar residues: residues 72–103 (SYAS…NQPW) and 121–142 (LSEQ…SGTN). Basic and acidic residues-rich tracts occupy residues 143-156 (PREH…KEVV), 185-202 (LRSE…DENT), 232-248 (QRRY…EGAR), and 304-315 (VNQEKTAVRRQD). Position 320 is a phosphoserine (serine 320). The RING-type; atypical zinc finger occupies 352-403 (CMVCCELVQVTAPVWSCQSCFHVFHLNCIKKWARSPASHADGQSGWRCPACQ). 8 consecutive NF-X1-type zinc fingers follow at residues 447 to 465 (CPHS…PCPA), 500 to 519 (CGQH…PCRI), 561 to 580 (CGSH…PCPR), 626 to 649 (CGSS…PCSR), 688 to 707 (CGRH…KCPL), 715 to 734 (CGLH…TCWQ), 826 to 848 (CGMH…ACKQ), and 857 to 878 (CGHP…ACKA). Positions 988–1056 (LKFVSDVEKE…KRNVVVTAVR (69 aa)) constitute an R3H domain. Residues 1071-1095 (ERETQTRPPPPIPHHRHQADKAPGS) are disordered.

This sequence belongs to the NFX1 family. Interacts with PABPC1 and PABPC4. Ubiquitously expressed, with highest levels in thymus.

It is found in the nucleus. Functionally, binds to the X-box motif of MHC class II genes and represses their expression. May play an important role in regulating the duration of an inflammatory response by limiting the period in which MHC class II molecules are induced by interferon-gamma. Together with PABPC1 or PABPC4, acts as a coactivator for TERT expression. Mediates E2-dependent ubiquitination. The sequence is that of Transcriptional repressor NF-X1 (Nfx1) from Mus musculus (Mouse).